The primary structure comprises 227 residues: Cytochrome c oxidase subunit 2 (227 aa).

The Mitochondrial intermembrane segment spans residues 1-14; that stretch reads MAYPFQLGLQDATS. A helical transmembrane segment spans residues 15-45; the sequence is PIMEELMNFHDHTLMIVFLISTLVLYIISLM. Residues 46-59 lie on the Mitochondrial matrix side of the membrane; it reads LTTKLTHTSTMDAQ. A helical transmembrane segment spans residues 60 to 87; sequence EVETIWTILPAVILILIALPSLRILYMM. Residues 88-227 are Mitochondrial intermembrane-facing; that stretch reads DEINNPALTV…YFENWSASMI (140 aa). The Cu cation site is built by H161, C196, E198, C200, H204, and M207. E198 is a binding site for Mg(2+). Y218 bears the Phosphotyrosine mark.

This sequence belongs to the cytochrome c oxidase subunit 2 family. In terms of assembly, component of the cytochrome c oxidase (complex IV, CIV), a multisubunit enzyme composed of 14 subunits. The complex is composed of a catalytic core of 3 subunits MT-CO1, MT-CO2 and MT-CO3, encoded in the mitochondrial DNA, and 11 supernumerary subunits COX4I, COX5A, COX5B, COX6A, COX6B, COX6C, COX7A, COX7B, COX7C, COX8 and NDUFA4, which are encoded in the nuclear genome. The complex exists as a monomer or a dimer and forms supercomplexes (SCs) in the inner mitochondrial membrane with NADH-ubiquinone oxidoreductase (complex I, CI) and ubiquinol-cytochrome c oxidoreductase (cytochrome b-c1 complex, complex III, CIII), resulting in different assemblies (supercomplex SCI(1)III(2)IV(1) and megacomplex MCI(2)III(2)IV(2)). Found in a complex with TMEM177, COA6, COX18, COX20, SCO1 and SCO2. Interacts with TMEM177 in a COX20-dependent manner. Interacts with COX20. Interacts with COX16. Requires Cu cation as cofactor.

The protein resides in the mitochondrion inner membrane. It carries out the reaction 4 Fe(II)-[cytochrome c] + O2 + 8 H(+)(in) = 4 Fe(III)-[cytochrome c] + 2 H2O + 4 H(+)(out). Its function is as follows. Component of the cytochrome c oxidase, the last enzyme in the mitochondrial electron transport chain which drives oxidative phosphorylation. The respiratory chain contains 3 multisubunit complexes succinate dehydrogenase (complex II, CII), ubiquinol-cytochrome c oxidoreductase (cytochrome b-c1 complex, complex III, CIII) and cytochrome c oxidase (complex IV, CIV), that cooperate to transfer electrons derived from NADH and succinate to molecular oxygen, creating an electrochemical gradient over the inner membrane that drives transmembrane transport and the ATP synthase. Cytochrome c oxidase is the component of the respiratory chain that catalyzes the reduction of oxygen to water. Electrons originating from reduced cytochrome c in the intermembrane space (IMS) are transferred via the dinuclear copper A center (CU(A)) of subunit 2 and heme A of subunit 1 to the active site in subunit 1, a binuclear center (BNC) formed by heme A3 and copper B (CU(B)). The BNC reduces molecular oxygen to 2 water molecules using 4 electrons from cytochrome c in the IMS and 4 protons from the mitochondrial matrix. The polypeptide is Cytochrome c oxidase subunit 2 (MT-CO2) (Maxomys surifer (Indomalayan maxomys)).